Here is a 424-residue protein sequence, read N- to C-terminus: Argininosuccinate synthase (424 aa).

ATP contacts are provided by residues A9 to S17 and A35. Positions 86 and 91 each coordinate L-citrulline. S114 to N122 serves as a coordination point for ATP. 3 residues coordinate L-aspartate: T118, N122, and D123. An L-citrulline-binding site is contributed by N122. Residues R126, S179, S188, E269, and Y281 each contribute to the L-citrulline site.

Belongs to the argininosuccinate synthase family. As to quaternary structure, homotetramer.

It carries out the reaction L-citrulline + L-aspartate + ATP = 2-(N(omega)-L-arginino)succinate + AMP + diphosphate + H(+). The protein operates within amino-acid biosynthesis; L-arginine biosynthesis; L-arginine from L-ornithine and carbamoyl phosphate: step 2/3. It functions in the pathway nitrogen metabolism; urea cycle; (N(omega)-L-arginino)succinate from L-aspartate and L-citrulline: step 1/1. This Anopheles gambiae (African malaria mosquito) protein is Argininosuccinate synthase.